A 230-amino-acid chain; its full sequence is Claudin-2 (230 aa).

At 1 to 7 (MASLGLQ) the chain is on the cytoplasmic side. Residues 8–28 (LVGYILGLLGLLGTLVAMLLP) form a helical membrane-spanning segment. Topologically, residues 29-81 (SWRTSSYVGTSIVTAVGFSKGLWMECATHSTGITQCDIYSTLLGLPADIQAAQ) are extracellular. Cys-54 and Cys-64 form a disulfide bridge. A helical membrane pass occupies residues 82–102 (AMMVTSSAISSLACIVSVVGM). Residues 103–116 (RCTVFCQDSRAKDR) are Cytoplasmic-facing. The chain crosses the membrane as a helical span at residues 117–137 (LAVVGGVFFIIGGLLGFIPVA). Residues 138–162 (WNLHGILRDFYSPLVPDSMKFEIGE) are Extracellular-facing. Residues 163–183 (ALYLGIISSLFSLVAGIILCF) traverse the membrane as a helical segment. The Cytoplasmic segment spans residues 184–230 (SCPLQGNRSDYYDSYQAQPLATRGSPRPGQPPKAKSEFNSYSLTGYV). The disordered stretch occupies residues 205-230 (TRGSPRPGQPPKAKSEFNSYSLTGYV). Lys-218 is covalently cross-linked (Glycyl lysine isopeptide (Lys-Gly) (interchain with G-Cter in SUMO)). A phosphoserine mark is found at Ser-219 and Ser-223. Positions 220–230 (EFNSYSLTGYV) are enriched in polar residues. The interval 229–230 (YV) is interaction with TJP1, TJP2 and TJP3.

The protein belongs to the claudin family. In terms of assembly, can form homo- and heteropolymers with other claudins to mediate paracellular barrier and channel functions of tight junctions in response to physiological stimuli. Homopolymers interact with CLDN3, but not CLDN1, homopolymers. Directly interacts with TJP1/ZO-1, TJP2/ZO-2 and TJP3/ZO-3. The disulfide bond is necessary for pore formation, but is not required for correct protein trafficking.

It localises to the cell junction. The protein resides in the tight junction. It is found in the cell membrane. The catalysed reaction is Na(+)(in) = Na(+)(out). It carries out the reaction K(+)(in) = K(+)(out). The enzyme catalyses Rb(+)(in) = Rb(+)(out). It catalyses the reaction Li(+)(in) = Li(+)(out). The catalysed reaction is Cs(+)(in) = Cs(+)(out). It carries out the reaction Ca(2+)(in) = Ca(2+)(out). The enzyme catalyses methylamine(out) = methylamine(in). It catalyses the reaction choline(out) = choline(in). The catalysed reaction is H2O(in) = H2O(out). Functionally, forms paracellular channels: polymerizes in tight junction strands with cation- and water-selective channels through the strands, conveying epithelial permeability in a process known as paracellular tight junction permeability. In intestinal epithelium, allows for sodium and water fluxes from the peritoneal side to the lumen of the intestine to regulate nutrient absorption and clear enteric pathogens as part of mucosal immune response. In kidney, allows passive sodium and calcium reabsorption across proximal tubules from the lumen back to the bloodstream. In the hepatobiliary tract, allows paracellular water and cation fluxes in the hepatic perivenous areas and biliary epithelium to generate bile flow and maintain osmotic gradients. The chain is Claudin-2 (CLDN2) from Canis lupus familiaris (Dog).